We begin with the raw amino-acid sequence, 227 residues long: Cytochrome c oxidase subunit 2 (227 aa).

The Mitochondrial intermembrane portion of the chain corresponds to Met1–Ser14. The helical transmembrane segment at Pro15–Met45 threads the bilayer. At Leu46–Gln59 the chain is on the mitochondrial matrix side. A helical membrane pass occupies residues Glu60–Met87. Over Asp88–Ile227 the chain is Mitochondrial intermembrane. The Cu cation site is built by His161, Cys196, Glu198, Cys200, His204, and Met207. Glu198 serves as a coordination point for Mg(2+).

It belongs to the cytochrome c oxidase subunit 2 family. Component of the cytochrome c oxidase (complex IV, CIV), a multisubunit enzyme composed of 14 subunits. The complex is composed of a catalytic core of 3 subunits MT-CO1, MT-CO2 and MT-CO3, encoded in the mitochondrial DNA, and 11 supernumerary subunits COX4I, COX5A, COX5B, COX6A, COX6B, COX6C, COX7A, COX7B, COX7C, COX8 and NDUFA4, which are encoded in the nuclear genome. The complex exists as a monomer or a dimer and forms supercomplexes (SCs) in the inner mitochondrial membrane with NADH-ubiquinone oxidoreductase (complex I, CI) and ubiquinol-cytochrome c oxidoreductase (cytochrome b-c1 complex, complex III, CIII), resulting in different assemblies (supercomplex SCI(1)III(2)IV(1) and megacomplex MCI(2)III(2)IV(2)). Found in a complex with TMEM177, COA6, COX18, COX20, SCO1 and SCO2. Interacts with TMEM177 in a COX20-dependent manner. Interacts with COX20. Interacts with COX16. The cofactor is Cu cation.

It is found in the mitochondrion inner membrane. The enzyme catalyses 4 Fe(II)-[cytochrome c] + O2 + 8 H(+)(in) = 4 Fe(III)-[cytochrome c] + 2 H2O + 4 H(+)(out). Functionally, component of the cytochrome c oxidase, the last enzyme in the mitochondrial electron transport chain which drives oxidative phosphorylation. The respiratory chain contains 3 multisubunit complexes succinate dehydrogenase (complex II, CII), ubiquinol-cytochrome c oxidoreductase (cytochrome b-c1 complex, complex III, CIII) and cytochrome c oxidase (complex IV, CIV), that cooperate to transfer electrons derived from NADH and succinate to molecular oxygen, creating an electrochemical gradient over the inner membrane that drives transmembrane transport and the ATP synthase. Cytochrome c oxidase is the component of the respiratory chain that catalyzes the reduction of oxygen to water. Electrons originating from reduced cytochrome c in the intermembrane space (IMS) are transferred via the dinuclear copper A center (CU(A)) of subunit 2 and heme A of subunit 1 to the active site in subunit 1, a binuclear center (BNC) formed by heme A3 and copper B (CU(B)). The BNC reduces molecular oxygen to 2 water molecules using 4 electrons from cytochrome c in the IMS and 4 protons from the mitochondrial matrix. This Niviventer culturatus (Oldfield white-bellied rat) protein is Cytochrome c oxidase subunit 2 (MT-CO2).